An 845-amino-acid chain; its full sequence is MPLSYQHFRKLLLLDDGTEVGPLEEELPRLADEDLNRRVAEDLNLGNLNVSIPWTHKVGNFTGLYSSTVPIFNQEWQTPSFPKIHLHEDIINRCQQFVGPLNVNEKRRLKLIMPARFYPNSTKYLPLDKGIKPYYPGHVVNHYFQARHYLHTLWKAGILYKRETTRSASFCGSPYSWEQELHHGRSVTKTSQRHGDESFCSQPSGILSRSSVGPCIRSQLKQPRLGLQPHQGPLATSQSGRSGSIWARVHPSTRRSSGVEPSGSGHIDYSASSSSSCLHQSAVRKTAYSHLSTSKRQSSSGHAVEFHKVPPNSARSQSQGPVFSCWWLQFRNSQPCSEYCLSHLVNLLEDWGPCADHGEHHIRIPRTPARVTGGVFLVDKNPHNTAESRLVVDFSQFSRGSTRVSWPKFAVPNLQSLTNLLSSNLSWLSLDVSAAFYHIPLHPAAMPHLLIGSSGLSRYVARLSSNSRIHNHQYGTLQNLHDSCSRQLYVSLMLLYKTYGRKLHLYSHPIILGFRKIPMGVGLSPFLLAQFTSAICSVVRRAFPHCLAFSYMDDVVLGAKSVQHLESLYTAVTNFLLSLGIHLNPNKTKRWGYSLNFMGYIIGSWGSLPQDHIVQKLKHCFRKLPVNRPIDWKVCQRIVGLLGFAAPFTQCGYPALMPLYACIQARQAFTFSPTYKAFLSKQYMNLYPVARQRPGLCQVFADATPTGWGLAIGHQRMRGTFVAPLPIHTAELLAACFARSRSGATLIGTDNSVVLSRKYTSFPWLLGCTANWILRGTSFVYVPSALNPADDPSRGRLGLYRPLLRLPYRPTTGRTSLYAVSPSVPSHLPDRVHFASPLHVAWRPP.

The segment at 1–179 (MPLSYQHFRK…FCGSPYSWEQ (179 aa)) is terminal protein domain (TP). The tract at residues 180 to 348 (ELHHGRSVTK…YCLSHLVNLL (169 aa)) is spacer. 3 disordered regions span residues 186-205 (SVTK…QPSG), 222-245 (QPRL…SGSI), and 288-318 (YSHL…RSQS). The segment covering 289-301 (SHLSTSKRQSSSG) has biased composition (polar residues). The polymerase/reverse transcriptase domain (RT) stretch occupies residues 349–692 (EDWGPCADHG…YMNLYPVARQ (344 aa)). In terms of domain architecture, Reverse transcriptase spans 359-602 (EHHIRIPRTP…YSLNFMGYII (244 aa)). 3 residues coordinate Mg(2+): aspartate 431, aspartate 553, and aspartate 554.

The protein belongs to the hepadnaviridae P protein family.

It catalyses the reaction DNA(n) + a 2'-deoxyribonucleoside 5'-triphosphate = DNA(n+1) + diphosphate. The enzyme catalyses Endonucleolytic cleavage to 5'-phosphomonoester.. With respect to regulation, activated by host HSP70 and HSP40 in vitro to be able to bind the epsilon loop of the pgRNA. Because deletion of the RNase H region renders the protein partly chaperone-independent, the chaperones may be needed indirectly to relieve occlusion of the RNA-binding site by this domain. Inhibited by several reverse-transcriptase inhibitors: Lamivudine, Adefovir and Entecavir. Its function is as follows. Multifunctional enzyme that converts the viral RNA genome into dsDNA in viral cytoplasmic capsids. This enzyme displays a DNA polymerase activity that can copy either DNA or RNA templates, and a ribonuclease H (RNase H) activity that cleaves the RNA strand of RNA-DNA heteroduplexes in a partially processive 3'- to 5'-endonucleasic mode. Neo-synthesized pregenomic RNA (pgRNA) are encapsidated together with the P protein, and reverse-transcribed inside the nucleocapsid. Initiation of reverse-transcription occurs first by binding the epsilon loop on the pgRNA genome, and is initiated by protein priming, thereby the 5'-end of (-)DNA is covalently linked to P protein. Partial (+)DNA is synthesized from the (-)DNA template and generates the relaxed circular DNA (RC-DNA) genome. After budding and infection, the RC-DNA migrates in the nucleus, and is converted into a plasmid-like covalently closed circular DNA (cccDNA). The activity of P protein does not seem to be necessary for cccDNA generation, and is presumably released from (+)DNA by host nuclear DNA repair machinery. This is Protein P from Hepatitis B virus genotype A3 (isolate Cameroon/CMR711/1994) (HBV-A).